A 503-amino-acid chain; its full sequence is Aminoaldehyde dehydrogenase 2, peroxisomal (503 aa).

3 residues coordinate Na(+): I28, D99, and L189. An NAD(+)-binding site is contributed by 238 to 245 (GSTMTGSK). E260 serves as the catalytic Proton acceptor. NAD(+) contacts are provided by C294 and E393. C294 serves as the catalytic Nucleophile. The Microbody targeting signal motif lies at 501–503 (SKL).

This sequence belongs to the aldehyde dehydrogenase family. Expressed in leaves, flowers and fruits.

It is found in the peroxisome. It catalyses the reaction 4-aminobutanal + NAD(+) + H2O = 4-aminobutanoate + NADH + 2 H(+). The enzyme catalyses 3-aminopropanal + NAD(+) + H2O = beta-alanine + NADH + 2 H(+). Its pathway is amine and polyamine biosynthesis; betaine biosynthesis via choline pathway; betaine from betaine aldehyde: step 1/1. Dehydrogenase that catalyzes the oxidation of several aminoaldehydes. Metabolizes and detoxifies aldehyde products of polyamine degradation to non-toxic amino acids. Catalyzes the oxidation of 4-aminobutanal and 3-aminopropanal to 4-aminobutanoate and beta-alanine, respectively. The polypeptide is Aminoaldehyde dehydrogenase 2, peroxisomal (Malus domestica (Apple)).